Here is a 301-residue protein sequence, read N- to C-terminus: Probable alpha-L-glutamate ligase 2 (301 aa).

An ATP-grasp domain is found at 104–287; the sequence is MQLLSRKGIG…VASMIIEFIV (184 aa). Residues Lys-141, 178–179, Asp-187, and 211–213 each bind ATP; these read EY and RSN. The Mg(2+) site is built by Asp-248, Glu-260, and Asn-262. Positions 248, 260, and 262 each coordinate Mn(2+).

This sequence belongs to the RimK family. Requires Mg(2+) as cofactor. Mn(2+) serves as cofactor.

The protein is Probable alpha-L-glutamate ligase 2 of Pseudoalteromonas atlantica (strain T6c / ATCC BAA-1087).